A 355-amino-acid polypeptide reads, in one-letter code: UDP-N-acetylglucosamine--N-acetylmuramyl-(pentapeptide) pyrophosphoryl-undecaprenol N-acetylglucosamine transferase (355 aa).

UDP-N-acetyl-alpha-D-glucosamine-binding positions include 15-17, Asn127, Arg163, Ser191, Ile244, 263-268, and Gln288; these read TGG and ALTVSE.

It belongs to the glycosyltransferase 28 family. MurG subfamily.

It is found in the cell inner membrane. The enzyme catalyses di-trans,octa-cis-undecaprenyl diphospho-N-acetyl-alpha-D-muramoyl-L-alanyl-D-glutamyl-meso-2,6-diaminopimeloyl-D-alanyl-D-alanine + UDP-N-acetyl-alpha-D-glucosamine = di-trans,octa-cis-undecaprenyl diphospho-[N-acetyl-alpha-D-glucosaminyl-(1-&gt;4)]-N-acetyl-alpha-D-muramoyl-L-alanyl-D-glutamyl-meso-2,6-diaminopimeloyl-D-alanyl-D-alanine + UDP + H(+). The protein operates within cell wall biogenesis; peptidoglycan biosynthesis. Cell wall formation. Catalyzes the transfer of a GlcNAc subunit on undecaprenyl-pyrophosphoryl-MurNAc-pentapeptide (lipid intermediate I) to form undecaprenyl-pyrophosphoryl-MurNAc-(pentapeptide)GlcNAc (lipid intermediate II). In Salmonella paratyphi A (strain ATCC 9150 / SARB42), this protein is UDP-N-acetylglucosamine--N-acetylmuramyl-(pentapeptide) pyrophosphoryl-undecaprenol N-acetylglucosamine transferase.